We begin with the raw amino-acid sequence, 301 residues long: Tegument protein VP22 (301 aa).

Positions 1–171 (MTSRRSVKSG…PTRSKTPAQG (171 aa)) are disordered. Positions 113–124 (RTPTTAPRAPRT) are enriched in low complexity. Residues 163-166 (TRSK) carry the Nuclear localization signal motif. Residues 174–267 (RKLHFSTAPP…LVNPDVVQDV (94 aa)) form an interaction with gE region. Residues 232–244 (LNELLGITTIRVT) carry the Nuclear export signal motif. The segment covering 269 to 281 (AATATRGRSAASR) has biased composition (low complexity). Positions 269–301 (AATATRGRSAASRPTERPRAPARSASRPRRPVE) are disordered.

Belongs to the alphaherpesvirinae VP22 tegument protein family. As to quaternary structure, interacts with gE (via C-terminus); this interaction is necessary for the recruitment of VP22 to the Golgi and its packaging into virions. Interacts with gM (via C-terminus). Interacts with VP16; this interaction allows the formation of a tripartite complex composed of VP16, VP22 and UL41/VHS. According to a report interacts with gD (via C-terminus). According another publication, does not interact with gD. Interacts with host CGAS. Interacts with host SET; this interaction may interfere with SET-mediated nucleosomal deposition onto the viral genome. Interacts with the capsid-binding protein UL16. Highly phosphorylated in the host cell. Packaging is selective for underphosphorylated forms.

It localises to the virion tegument. The protein resides in the host cytoplasm. The protein localises to the host nucleus. Its subcellular location is the host Golgi apparatus. In terms of biological role, tegument protein that plays different roles during the time course of infection. Participates in both the accumulation of viral mRNAs and viral protein translation at late time of infection. Modulates the RNase activity of the virion host shutoff protein UL41 probably to ensure necessary levels of key cellular mRNAs and proteins. Plays a role in microtubule reorganization that occurs after viral infection by stabilizing microtubule network. Finally, may prevent nucleosomal deposition onto the viral genome by interacting with and inhibiting host SET. Plays a role in the inhibition of host innate immune system by targeting the CGAS enzymatic activity which is the principal cytosolic DNA sensor that detects invading viral DNA. Acts by mediating disruption of liquid-like droplets in which CGAS is activated, thereby preventing CGAS activity. The polypeptide is Tegument protein VP22 (Human herpesvirus 1 (strain 17) (HHV-1)).